Here is a 137-residue protein sequence, read N- to C-terminus: Large ribosomal subunit protein uL16 (137 aa).

The disordered stretch occupies residues 1–20 (MLQPKRTKFRKQQKMRNRGL).

The protein belongs to the universal ribosomal protein uL16 family. Part of the 50S ribosomal subunit.

Binds 23S rRNA and is also seen to make contacts with the A and possibly P site tRNAs. The chain is Large ribosomal subunit protein uL16 from Francisella philomiragia subsp. philomiragia (strain ATCC 25017 / CCUG 19701 / FSC 153 / O#319-036).